Reading from the N-terminus, the 247-residue chain is ATP synthase delta chain, chloroplastic (247 aa).

A chloroplast-targeting transit peptide spans 1-60 (MAALRLASFTLRPAAAAAASASSGATPAAPRSASFARAARGLPSLRLAPPRRRGDLVRPR).

Belongs to the ATPase delta chain family. In terms of assembly, F-type ATPases have 2 components, CF(1) - the catalytic core - and CF(0) - the membrane proton channel. CF(1) has five subunits: alpha(3), beta(3), gamma(1), delta(1), epsilon(1). CF(0) has three main subunits: a, b and c.

Its subcellular location is the plastid. It is found in the chloroplast thylakoid membrane. Its function is as follows. This protein seems to be part of the stalk that links CF(0) to CF(1). It either transmits conformational changes from CF(0) into CF(1) or is implicated in proton conduction. This chain is ATP synthase delta chain, chloroplastic (ATPD), found in Sorghum bicolor (Sorghum).